Reading from the N-terminus, the 83-residue chain is Exodeoxyribonuclease 7 small subunit (83 aa).

This sequence belongs to the XseB family. In terms of assembly, heterooligomer composed of large and small subunits.

The protein resides in the cytoplasm. It catalyses the reaction Exonucleolytic cleavage in either 5'- to 3'- or 3'- to 5'-direction to yield nucleoside 5'-phosphates.. Functionally, bidirectionally degrades single-stranded DNA into large acid-insoluble oligonucleotides, which are then degraded further into small acid-soluble oligonucleotides. In Nitrobacter winogradskyi (strain ATCC 25391 / DSM 10237 / CIP 104748 / NCIMB 11846 / Nb-255), this protein is Exodeoxyribonuclease 7 small subunit.